The sequence spans 107 residues: Probable monothiol glutaredoxin 2 (107 aa).

Residues 7–107 enclose the Glutaredoxin domain; it reads FKFIENEIKN…LEKMLKAYTR (101 aa). Lysine 24 provides a ligand contact to glutathione. Cysteine 32 lines the [2Fe-2S] cluster pocket. Residues arginine 61, phenylalanine 73, and 86 to 87 each bind glutathione; that span reads CD.

The protein belongs to the glutaredoxin family. Monothiol subfamily.

The polypeptide is Probable monothiol glutaredoxin 2 (grxC2) (Rickettsia conorii (strain ATCC VR-613 / Malish 7)).